A 723-amino-acid chain; its full sequence is Homeobox protein HAT3.1 (723 aa).

Over residues 1 to 10 (MYKAVSKRVT) the composition is skewed to basic residues. 2 disordered regions span residues 1–94 (MYKA…GSHR) and 135–173 (KRAQ…QVRE). Polar residues predominate over residues 11-23 (RSSGSGLKQTNVD). Positions 58-83 (LHHEIMDHGKGNEEQKPTPQTVKKDS) are enriched in basic and acidic residues. The segment at 265-322 (DIFCAKCGSKDLSVDNDIILCDGFCDRGFHQYCLEPPLRKEDIPPDDEGWLCPGCDCK) adopts a PHD-type zinc-finger fold. 2 disordered regions span residues 357–628 (GGQN…KTQR) and 680–723 (VEKL…RRRK). Residues 365 to 407 (LPSDDSDDEEYDPDCLNDNENDEDGSDDNEESENEDGSSDETE) are compositionally biased toward acidic residues. Positions 417–427 (ESFKEGKDIMK) are enriched in basic and acidic residues. Residues 435–453 (DDSEDDDYDPDAPTCDDDK) show a composition bias toward acidic residues. Basic and acidic residues-rich tracts occupy residues 518–530 (RNVE…KLYD) and 547–556 (DKTARMGKED). Over residues 580–589 (KKLIRKSKRA) the composition is skewed to basic residues. A DNA-binding region (homeobox) is located at residues 614–673 (SSSSACKQTDPKTQRLYISFQENQYPDKATKESLAKELQMTVKQVNNWFKHRRWSINSKP). Residues 680–690 (VEKLKTGKEGE) are compositionally biased toward basic and acidic residues. Positions 695–705 (VAGSSKQTMET) are enriched in polar residues.

This sequence belongs to the PHD-associated homeobox family. Primarily detected in root tissue.

It localises to the nucleus. Its function is as follows. Binds only to large DNA fragments. Recognizes a DNA fragment carrying 8 copies of box7 motif of the light-induced cab-E promoter of Nicotiana plumbaginifolia. Also recognizes the box7m1 motif. This chain is Homeobox protein HAT3.1 (HAT3.1), found in Arabidopsis thaliana (Mouse-ear cress).